The sequence spans 482 residues: Keratin, type I cytoskeletal 39 (482 aa).

The segment at methionine 1–asparagine 24 is disordered. A head region spans residues methionine 1–glutamate 91. Residues glutamate 91–leucine 402 enclose the IF rod domain. Residues lysine 92–alanine 126 are coil 1A. Positions cysteine 127 to aspartate 137 are linker 1. The segment at tyrosine 138–cysteine 238 is coil 1B. The interval glutamine 239–valine 254 is linker 12. The interval aspartate 255–leucine 398 is coil 2. The tail stretch occupies residues aspartate 399–valine 482.

The protein belongs to the intermediate filament family. In terms of assembly, heterotetramer of two type I and two type II keratins.

Functionally, may play a role in late hair differentiation. This is Keratin, type I cytoskeletal 39 (Krt39) from Mus musculus (Mouse).